The chain runs to 439 residues: Mitochondrial distribution and morphology protein 12 (439 aa).

Residues 1-439 enclose the SMP-LTD domain; it reads MSIDINWEAA…VYPSFWTFLV (439 aa). Acidic residues predominate over residues 71-84; the sequence is EEDEGDEDFSDDQD. Disordered stretches follow at residues 71–104, 182–278, and 362–385; these read EEDEGDEDFSDDQDGAPKHPPTIATERSGAGTWQ, TPLA…HEKK, and YIPGINPIGGGASGGAASSRRRDD. Positions 212–229 are enriched in basic and acidic residues; it reads DYPRPVHRQTDTDIDSGH. Residues 230-255 show a composition bias toward polar residues; that stretch reads SRPSTADTLNSINSQRISNPALSHPH. Basic and acidic residues predominate over residues 256–269; sequence SSNESHPDTRDHSP.

It belongs to the MDM12 family. In terms of assembly, component of the ER-mitochondria encounter structure (ERMES) or MDM complex, composed of MMM1, MDM10, MDM12 and MDM34. An MMM1 homodimer associates with one molecule of MDM12 on each side in a pairwise head-to-tail manner, and the SMP-LTD domains of MMM1 and MDM12 generate a continuous hydrophobic tunnel for phospholipid trafficking.

The protein resides in the mitochondrion outer membrane. Its subcellular location is the endoplasmic reticulum membrane. In terms of biological role, component of the ERMES/MDM complex, which serves as a molecular tether to connect the endoplasmic reticulum (ER) and mitochondria. Components of this complex are involved in the control of mitochondrial shape and protein biogenesis, and function in nonvesicular lipid trafficking between the ER and mitochondria. MDM12 is required for the interaction of the ER-resident membrane protein MMM1 and the outer mitochondrial membrane-resident beta-barrel protein MDM10. The MDM12-MMM1 subcomplex functions in the major beta-barrel assembly pathway that is responsible for biogenesis of all mitochondrial outer membrane beta-barrel proteins, and acts in a late step after the SAM complex. The MDM10-MDM12-MMM1 subcomplex further acts in the TOM40-specific pathway after the action of the MDM12-MMM1 complex. Essential for establishing and maintaining the structure of mitochondria and maintenance of mtDNA nucleoids. The protein is Mitochondrial distribution and morphology protein 12 of Uncinocarpus reesii (strain UAMH 1704).